Here is a 643-residue protein sequence, read N- to C-terminus: Transducer protein Htr8 (643 aa).

5 helical membrane passes run 48–68 (VFVL…GTES), 79–99 (PGIL…LASI), 115–134 (VLAS…EAHF), 149–169 (WLPF…FGMI), and 184–204 (PWVW…ALMA). The HAMP domain maps to 273 to 326 (ERLEATANTYGAAMARAADGDLSVRLDPDVENDAMAAIAASFNEMLDETETTIR). Residues 345–581 (GVVEIEDASG…EAVSMIAEVS (237 aa)) enclose the Methyl-accepting transducer domain.

The protein belongs to the methyl-accepting chemotaxis (MCP) protein family. Methylated by CheR.

It localises to the cell membrane. Its function is as follows. Potentially involved in chemo- or phototactic signal transduction. This is Transducer protein Htr8 (htr8) from Halobacterium salinarum (strain ATCC 29341 / DSM 671 / R1).